A 636-amino-acid polypeptide reads, in one-letter code: MSMKKTAAVEDKKISLDKESYIKSVQERIAKIPISNYRNFSIVAHVDHGKSTLSDRLLELTGVIQPGDANKQVLDKLDVERERGITVKAQTCSMFYVDPKSKEEYLLHLVDTPGHVDFRAEVSRSYASCGGALLLIDASQGVQAQTVANFYLAYSMGLKLIPVINKIDLDAADIPRAMDQVETTFELPREDCIPVSAKTGLNIENIIPAIIRDIPGPRGSVDKPLKALLVDSWHDPYVGVVMLIHVVDGVVKKGMKLLSAHSEKRYDVKEVGIMYPDKMPMDCVKAGQVAYIIPGMRNPREAMIGDTFYQYGKHEGLEPLPGFEEPKPMVFVGAFPADGGEFKVMNDHMENLVLNDRSVTLEKETSNALGLGWRLGFLGSLHASVFKERLENEYGAKIILTAPTVPYKLIFKDGEESIVTNPDEFPGADFRNHNIEMLMEPYVNALMTIPDEYIGTVMSLCENNRGIQKELEYLTTGQVLLKYEIPLAQLVEDFFGKLKGCTKGYASLDYEDAGYKKSDIVKMELCVNGEPQDALTQVMHRSQVLSRGKEYVTRFKEYLKFQLFEVAIQAKVNNKVVARETIKAKRKDVTQKLHAADISRRKKLLSRQKEGKKQMKATGKISINQEAYQAFLRRAD.

One can recognise a tr-type G domain in the interval 35–218; it reads SNYRNFSIVA…AIIRDIPGPR (184 aa). Residues 44–51, 111–115, and 165–168 each bind GTP; these read AHVDHGKS, DTPGH, and NKID.

It belongs to the TRAFAC class translation factor GTPase superfamily. Classic translation factor GTPase family. LepA subfamily.

It is found in the mitochondrion inner membrane. The enzyme catalyses GTP + H2O = GDP + phosphate + H(+). Promotes mitochondrial protein synthesis. May act as a fidelity factor of the translation reaction, by catalyzing a one-codon backward translocation of tRNAs on improperly translocated ribosomes. Binds to mitochondrial ribosomes in a GTP-dependent manner. The sequence is that of Translation factor GUF1, mitochondrial from Debaryomyces hansenii (strain ATCC 36239 / CBS 767 / BCRC 21394 / JCM 1990 / NBRC 0083 / IGC 2968) (Yeast).